The following is a 150-amino-acid chain: Large ribosomal subunit protein bL9 (150 aa).

Belongs to the bacterial ribosomal protein bL9 family.

Its function is as follows. Binds to the 23S rRNA. The sequence is that of Large ribosomal subunit protein bL9 from Halorhodospira halophila (strain DSM 244 / SL1) (Ectothiorhodospira halophila (strain DSM 244 / SL1)).